Here is a 162-residue protein sequence, read N- to C-terminus: MRLDQVARSLLLKEFVSGFALAMRYLFKPKATINYPFEMGHRSPRFRGEHALRRYPNGEERCIACKLCEAVCPAQAITIEAGPRRNDGTRRTTRYDIDMVKCIYCGMCQEACPVDAIVEGPNFEFSVETREELLYDKQRLLANGDRWEREIARNIAADAPYR.

2 consecutive 4Fe-4S ferredoxin-type domains span residues 52–82 and 93–122; these read LRRY…IEAG and TRYD…EGPN. Positions 62, 65, 68, 72, 102, 105, 108, and 112 each coordinate [4Fe-4S] cluster.

It belongs to the complex I 23 kDa subunit family. In terms of assembly, NDH-1 is composed of 14 different subunits. Subunits NuoA, H, J, K, L, M, N constitute the membrane sector of the complex. Requires [4Fe-4S] cluster as cofactor.

Its subcellular location is the cell inner membrane. It catalyses the reaction a quinone + NADH + 5 H(+)(in) = a quinol + NAD(+) + 4 H(+)(out). NDH-1 shuttles electrons from NADH, via FMN and iron-sulfur (Fe-S) centers, to quinones in the respiratory chain. The immediate electron acceptor for the enzyme in this species is believed to be ubiquinone. Couples the redox reaction to proton translocation (for every two electrons transferred, four hydrogen ions are translocated across the cytoplasmic membrane), and thus conserves the redox energy in a proton gradient. This chain is NADH-quinone oxidoreductase subunit I, found in Methylobacterium sp. (strain 4-46).